A 71-amino-acid polypeptide reads, in one-letter code: Lantibiotic Flvbeta.c (71 aa).

Residues 1–33 (MENKFDMEKFKKLAAVVSEDELDTLLDETTVGA) constitute a propeptide, cleaved by FlvT. A cross-link (lanthionine (Ser-Cys); by FlvM2) is located at residues 35–39 (SSNDC). At S36 the chain carries 2,3-didehydroalanine (Ser); by FlvM2. Cross-links (beta-methyllanthionine (Thr-Cys); by FlvM2) lie at residues 54–60 (TSKFDWC), 62–65 (TGAC), and 66–69 (TTSC).

In terms of processing, contains LL-lanthionine and DL-beta-methyllanthionine, when coepressed in E.coli with the flavecin synthetase FlvM2.

The protein localises to the secreted. Functionally, lanthionine-containing peptide antibiotic (lantibiotic) that is probably active on Gram-positive bacteria, since its analog [Del1]Flvbeta.c shows antibacterial activity against M.luteus. This activity is not synergistically enhanced by [Del2]Flvalpha.a, an analog of Flvalpha.a, which is encoded by the same operon than Flvbeta.c. The bactericidal activity of lantibiotics is based on depolarization of energized bacterial cytoplasmic membranes, initiated by the formation of aqueous transmembrane pores. The chain is Lantibiotic Flvbeta.c from Ruminococcus flavefaciens.